The primary structure comprises 219 residues: Claudin-3 (219 aa).

Over 1–8 (MSMGLEIT) the chain is Cytoplasmic. Residues 9 to 29 (GTSLAVLGWLCTIVCCALPMW) form a helical membrane-spanning segment. Residues 30-80 (RVSAFIGSSIITAQITWEGLWMNCVVQSTGQMQCKMYDSLLALPQDLQAAR) are Extracellular-facing. Residues 81-101 (ALIVVSILLAAFGLLVALVGA) form a helical membrane-spanning segment. Topologically, residues 102-115 (QCTNCVQDETAKAK) are cytoplasmic. The chain crosses the membrane as a helical span at residues 116–136 (ITIVAGVLFLLAALLTLVPVS). The Extracellular portion of the chain corresponds to 137 to 159 (WSANTIIRDFYNPLVPEAQKREM). Residues 160–180 (GAGLYVGWAAAALQLLGGALL) traverse the membrane as a helical segment. Residues 181 to 219 (CCSCPPRDKYAPTKILYSAPRSTGPGTGTGTAYDRKDYV) are Cytoplasmic-facing. Residue Tyr197 is modified to Phosphotyrosine. Ser198 is subject to Phosphoserine. The interactions with TJP1, TJP2 and TJP3 stretch occupies residues 218–219 (YV).

It belongs to the claudin family. As to quaternary structure, can form homo- and heteropolymers with other CLDN. Homopolymers interact with CLDN1 and CLDN2 homopolymers. Interacts in cis (within the same plasma membrane) with CLDN19. Directly interacts with TJP1/ZO-1, TJP2/ZO-2 and TJP3/ZO-3. In terms of assembly, (Microbial infection) Interacts with Clostridium perfringens enterotoxin CPE; the interaction may disrupt claudin assembly in tight junctions. Expressed in the lung. Expressed at high levels in the liver and at lower levels, in kidney and testis.

The protein resides in the cell junction. Its subcellular location is the tight junction. It is found in the cell membrane. Its function is as follows. Plays a major role in tight junction-specific obliteration of the intercellular space, through calcium-independent cell-adhesion activity. The protein is Claudin-3 (Cldn3) of Mus musculus (Mouse).